Here is a 135-residue protein sequence, read N- to C-terminus: Poly [ADP-ribose] polymerase 1 (135 aa).

In terms of domain architecture, PARP alpha-helical spans 1–21; that stretch reads QAKVEMLDNLLDIEVAYSLLK. Residues 30 to 135 enclose the PARP catalytic domain; that stretch reads DPIDINYEKL…APVTGYMFGK (106 aa). NAD(+)-binding positions include 104–106, glycine 113, and arginine 120; that span reads HGS. Residue lysine 135 is part of the active site.

This sequence belongs to the ARTD/PARP family. Homodimer; PARP-type zinc-fingers from separate parp1 molecules form a dimer module that specifically recognizes DNA strand breaks. Post-translationally, poly-ADP-ribosylated on serine, glutamate and aspartate residues by autocatalysis. Auto-ADP-ribosylation on serine takes place following interaction with HPF1. Auto poly-ADP-ribosylation on serine residues promotes its dissociation from chromatin.

The protein resides in the chromosome. The protein localises to the nucleus. It localises to the nucleolus. It is found in the cytoplasm. Its subcellular location is the cytosol. It catalyses the reaction NAD(+) + (ADP-D-ribosyl)n-acceptor = nicotinamide + (ADP-D-ribosyl)n+1-acceptor + H(+).. The catalysed reaction is L-seryl-[protein] + NAD(+) = O-(ADP-D-ribosyl)-L-seryl-[protein] + nicotinamide + H(+). The enzyme catalyses L-aspartyl-[protein] + NAD(+) = 4-O-(ADP-D-ribosyl)-L-aspartyl-[protein] + nicotinamide. It carries out the reaction L-glutamyl-[protein] + NAD(+) = 5-O-(ADP-D-ribosyl)-L-glutamyl-[protein] + nicotinamide. It catalyses the reaction L-tyrosyl-[protein] + NAD(+) = O-(ADP-D-ribosyl)-L-tyrosyl-[protein] + nicotinamide + H(+). The catalysed reaction is L-histidyl-[protein] + NAD(+) = N(tele)-(ADP-D-ribosyl)-L-histidyl-[protein] + nicotinamide + H(+). Its activity is regulated as follows. ADP-ribosyltransferase activity is regulated via an allosteric activation mechanism. In absence of activation signal, parp1 is autoinhibited by the PARP alpha-helical domain (also named HD region), which prevents effective NAD(+)-binding. Activity is highly stimulated by signals, such as DNA strand breaks. Binding to damaged DNA unfolds the PARP alpha-helical domain, relieving autoinhibition. Poly-ADP-ribosyltransferase activity is tightly regulated and parp1 is removed from damaged chromatin following initial poly-ADP-ribosylation of chromatin to avoid prolonged residence (trapping) that has cytotoxic consequences. A number of factors or post-translational modifications (auto-poly-ADP-ribosylation) promote parp1 removal from chromatin. In terms of biological role, poly-ADP-ribosyltransferase that mediates poly-ADP-ribosylation of proteins and plays a key role in DNA repair. Mediates glutamate, aspartate, serine, histidine or tyrosine ADP-ribosylation of proteins: the ADP-D-ribosyl group of NAD(+) is transferred to the acceptor carboxyl group of target residues and further ADP-ribosyl groups are transferred to the 2'-position of the terminal adenosine moiety, building up a polymer with an average chain length of 20-30 units. Serine ADP-ribosylation of proteins constitutes the primary form of ADP-ribosylation of proteins in response to DNA damage. Specificity for the different amino acids is conferred by interacting factors, such as hpf1 and nmnat1. Following interaction with hpf1, catalyzes serine ADP-ribosylation of target proteins; hpf1 confers serine specificity by completing the parp1 active site. Also catalyzes tyrosine ADP-ribosylation of target proteins following interaction with hpf1. Following interaction with nmnat1, catalyzes glutamate and aspartate ADP-ribosylation of target proteins; nmnat1 confers glutamate and aspartate specificity. Parp1 initiates the repair of DNA breaks: recognizes and binds DNA breaks within chromatin and recruits hpf1, licensing serine ADP-ribosylation of target proteins, such as histones (H2BS6ADPr and H3S10ADPr), thereby promoting decompaction of chromatin and the recruitment of repair factors leading to the reparation of DNA strand breaks. In addition to base excision repair (BER) pathway, also involved in double-strand breaks (DSBs) repair. Mediates the poly-ADP-ribosylation of a number of proteins. In addition to proteins, also able to ADP-ribosylate DNA: catalyzes ADP-ribosylation of DNA strand break termini containing terminal phosphates and a 2'-OH group in single- and double-stranded DNA, respectively. Parp1-mediated DNA repair in neurons plays a role in sleep: senses DNA damage in neurons and promotes sleep, facilitating efficient DNA repair. In addition to DNA repair, also involved in other processes, such as transcription regulation, programmed cell death, membrane repair, adipogenesis and innate immunity. Acts as a repressor of transcription: binds to nucleosomes and modulates chromatin structure in a manner similar to histone H1, thereby altering RNA polymerase II. Acts both as a positive and negative regulator of transcription elongation, depending on the context. Poly-ADP-ribose chains generated by parp1 also play a role in poly-ADP-ribose-dependent cell death, a process named parthanatos. Also acts as a negative regulator of the cGAS-STING pathway by mediating poly-ADP-ribosylation and inactivation of cgas. Acts as a negative regulator of adipogenesis by catalyzing poly ADP-ribosylation of histone H2B on 'Glu-35' (H2BE35ADPr). The polypeptide is Poly [ADP-ribose] polymerase 1 (parp1) (Oncorhynchus masou (Cherry salmon)).